A 367-amino-acid chain; its full sequence is Biotin synthase (367 aa).

In terms of domain architecture, Radical SAM core spans 73 to 308 (CCGNTVDLCS…EQIIRYAGGR (236 aa)). The [4Fe-4S] cluster site is built by Cys-91, Cys-95, and Cys-98. Positions 136, 173, 233, and 303 each coordinate [2Fe-2S] cluster.

Belongs to the radical SAM superfamily. Biotin synthase family. As to quaternary structure, homodimer. [4Fe-4S] cluster is required as a cofactor. The cofactor is [2Fe-2S] cluster.

It catalyses the reaction (4R,5S)-dethiobiotin + (sulfur carrier)-SH + 2 reduced [2Fe-2S]-[ferredoxin] + 2 S-adenosyl-L-methionine = (sulfur carrier)-H + biotin + 2 5'-deoxyadenosine + 2 L-methionine + 2 oxidized [2Fe-2S]-[ferredoxin]. It functions in the pathway cofactor biosynthesis; biotin biosynthesis; biotin from 7,8-diaminononanoate: step 2/2. Functionally, catalyzes the conversion of dethiobiotin (DTB) to biotin by the insertion of a sulfur atom into dethiobiotin via a radical-based mechanism. In Picosynechococcus sp. (strain ATCC 27264 / PCC 7002 / PR-6) (Agmenellum quadruplicatum), this protein is Biotin synthase.